Reading from the N-terminus, the 734-residue chain is Photosystem I P700 chlorophyll a apoprotein A2 (734 aa).

Helical transmembrane passes span 46 to 69 (IFAS…FHVA), 135 to 158 (LYTG…LHLQ), 175 to 199 (LNHH…HVAI), 273 to 291 (IAHH…GHMY), 330 to 353 (LHFQ…QHMY), 369 to 395 (AALY…IFFI), 417 to 439 (AIIS…LYVH), and 517 to 535 (FLVH…LILV). Positions 559 and 568 each coordinate [4Fe-4S] cluster. The next 2 helical transmembrane spans lie at 575-596 (AFYL…YWHW) and 643-665 (LSVW…MFLI). 3 residues coordinate chlorophyll a: H654, M662, and Y670. A phylloquinone-binding site is contributed by W671. The helical transmembrane segment at 707 to 727 (LVGLVHFSVGYIFTYAAFLIA) threads the bilayer.

The protein belongs to the PsaA/PsaB family. As to quaternary structure, the PsaA/B heterodimer binds the P700 chlorophyll special pair and subsequent electron acceptors. PSI consists of a core antenna complex that captures photons, and an electron transfer chain that converts photonic excitation into a charge separation. The eukaryotic PSI reaction center is composed of at least 11 subunits. Requires P700 is a chlorophyll a/chlorophyll a' dimer, A0 is one or more chlorophyll a, A1 is one or both phylloquinones and FX is a shared 4Fe-4S iron-sulfur center. as cofactor.

Its subcellular location is the plastid. The protein resides in the chloroplast thylakoid membrane. It carries out the reaction reduced [plastocyanin] + hnu + oxidized [2Fe-2S]-[ferredoxin] = oxidized [plastocyanin] + reduced [2Fe-2S]-[ferredoxin]. Functionally, psaA and PsaB bind P700, the primary electron donor of photosystem I (PSI), as well as the electron acceptors A0, A1 and FX. PSI is a plastocyanin-ferredoxin oxidoreductase, converting photonic excitation into a charge separation, which transfers an electron from the donor P700 chlorophyll pair to the spectroscopically characterized acceptors A0, A1, FX, FA and FB in turn. Oxidized P700 is reduced on the lumenal side of the thylakoid membrane by plastocyanin. The chain is Photosystem I P700 chlorophyll a apoprotein A2 from Nicotiana tomentosiformis (Tobacco).